A 173-amino-acid chain; its full sequence is Ribosome maturation factor RimM (173 aa).

One can recognise a PRC barrel domain in the interval 97–171 (EGEFFYHEII…QITIEPMEGL (75 aa)).

The protein belongs to the RimM family. As to quaternary structure, binds ribosomal protein uS19.

The protein localises to the cytoplasm. An accessory protein needed during the final step in the assembly of 30S ribosomal subunit, possibly for assembly of the head region. Essential for efficient processing of 16S rRNA. May be needed both before and after RbfA during the maturation of 16S rRNA. It has affinity for free ribosomal 30S subunits but not for 70S ribosomes. This chain is Ribosome maturation factor RimM, found in Halalkalibacterium halodurans (strain ATCC BAA-125 / DSM 18197 / FERM 7344 / JCM 9153 / C-125) (Bacillus halodurans).